Reading from the N-terminus, the 572-residue chain is Proline--tRNA ligase (572 aa).

Belongs to the class-II aminoacyl-tRNA synthetase family. ProS type 1 subfamily. In terms of assembly, homodimer.

It is found in the cytoplasm. It carries out the reaction tRNA(Pro) + L-proline + ATP = L-prolyl-tRNA(Pro) + AMP + diphosphate. Its function is as follows. Catalyzes the attachment of proline to tRNA(Pro) in a two-step reaction: proline is first activated by ATP to form Pro-AMP and then transferred to the acceptor end of tRNA(Pro). As ProRS can inadvertently accommodate and process non-cognate amino acids such as alanine and cysteine, to avoid such errors it has two additional distinct editing activities against alanine. One activity is designated as 'pretransfer' editing and involves the tRNA(Pro)-independent hydrolysis of activated Ala-AMP. The other activity is designated 'posttransfer' editing and involves deacylation of mischarged Ala-tRNA(Pro). The misacylated Cys-tRNA(Pro) is not edited by ProRS. This chain is Proline--tRNA ligase, found in Caldicellulosiruptor bescii (strain ATCC BAA-1888 / DSM 6725 / KCTC 15123 / Z-1320) (Anaerocellum thermophilum).